Consider the following 324-residue polypeptide: Glutaminase 2 (324 aa).

Residues Ser75, Asn127, Glu171, Asn178, Tyr202, Tyr254, and Val272 each coordinate substrate.

Belongs to the glutaminase family. As to quaternary structure, homotetramer.

It carries out the reaction L-glutamine + H2O = L-glutamate + NH4(+). This Halalkalibacterium halodurans (strain ATCC BAA-125 / DSM 18197 / FERM 7344 / JCM 9153 / C-125) (Bacillus halodurans) protein is Glutaminase 2.